The chain runs to 406 residues: Argininosuccinate synthase (406 aa).

8 to 16 (AYSGGLDTT) lines the ATP pocket. Tyrosine 86 and serine 91 together coordinate L-citrulline. An ATP-binding site is contributed by glycine 116. Positions 118, 122, and 123 each coordinate L-aspartate. Asparagine 122 contributes to the L-citrulline binding site. L-citrulline contacts are provided by arginine 126, serine 175, serine 184, glutamate 261, and tyrosine 273.

This sequence belongs to the argininosuccinate synthase family. Type 1 subfamily. In terms of assembly, homotetramer.

Its subcellular location is the cytoplasm. The enzyme catalyses L-citrulline + L-aspartate + ATP = 2-(N(omega)-L-arginino)succinate + AMP + diphosphate + H(+). It functions in the pathway amino-acid biosynthesis; L-arginine biosynthesis; L-arginine from L-ornithine and carbamoyl phosphate: step 2/3. This is Argininosuccinate synthase from Brachyspira hyodysenteriae (strain ATCC 49526 / WA1).